Here is a 265-residue protein sequence, read N- to C-terminus: Phosphatidylserine decarboxylase proenzyme (265 aa).

Residues Asp-86, His-142, and Ser-226 each act as charge relay system; for autoendoproteolytic cleavage activity in the active site. The active-site Schiff-base intermediate with substrate; via pyruvic acid; for decarboxylase activity is Ser-226. Ser-226 is subject to Pyruvic acid (Ser); by autocatalysis.

The protein belongs to the phosphatidylserine decarboxylase family. PSD-B subfamily. Prokaryotic type I sub-subfamily. Heterodimer of a large membrane-associated beta subunit and a small pyruvoyl-containing alpha subunit. It depends on pyruvate as a cofactor. Post-translationally, is synthesized initially as an inactive proenzyme. Formation of the active enzyme involves a self-maturation process in which the active site pyruvoyl group is generated from an internal serine residue via an autocatalytic post-translational modification. Two non-identical subunits are generated from the proenzyme in this reaction, and the pyruvate is formed at the N-terminus of the alpha chain, which is derived from the carboxyl end of the proenzyme. The autoendoproteolytic cleavage occurs by a canonical serine protease mechanism, in which the side chain hydroxyl group of the serine supplies its oxygen atom to form the C-terminus of the beta chain, while the remainder of the serine residue undergoes an oxidative deamination to produce ammonia and the pyruvoyl prosthetic group on the alpha chain. During this reaction, the Ser that is part of the protease active site of the proenzyme becomes the pyruvoyl prosthetic group, which constitutes an essential element of the active site of the mature decarboxylase.

It is found in the cell membrane. It carries out the reaction a 1,2-diacyl-sn-glycero-3-phospho-L-serine + H(+) = a 1,2-diacyl-sn-glycero-3-phosphoethanolamine + CO2. The protein operates within phospholipid metabolism; phosphatidylethanolamine biosynthesis; phosphatidylethanolamine from CDP-diacylglycerol: step 2/2. Its function is as follows. Catalyzes the formation of phosphatidylethanolamine (PtdEtn) from phosphatidylserine (PtdSer). This chain is Phosphatidylserine decarboxylase proenzyme, found in Anoxybacillus flavithermus (strain DSM 21510 / WK1).